The chain runs to 316 residues: Membrane protein UL148 (316 aa).

Residues 1–20 (MLRLLFTLVLLALYGPSVDA) form the signal peptide. Residues 286-308 (FIVQYLNTLLITMMAAIWARVLI) form a helical membrane-spanning segment.

Interacts with host SEL1L.

It localises to the host endoplasmic reticulum membrane. In terms of biological role, chaperone protein that plays an important role in HCMV tropism. Cooperates with UL116 to regulate the abundance of gH-gL complexes in virion. Favors the incorporation of gL into virions once UL116 has regulated the early folding steps of virion assembly. Interacts with the host ERAD machinery and slows gO decay which would otherwise be constitutively degraded. Reorganizes the host endoplasmic reticulum and activates the unfolded protein response. Additionally, plays a role in the evasion of antiviral immune response by down-regulating cell surface expression of host CD58. Mechanistically, interacts with host CD58 and retains its immature form intracellularly. The capacity to cause endoplasmic reticulum reorganization and the intracellular retention of host CD58 are functionally independent properties. This Human cytomegalovirus (strain Merlin) (HHV-5) protein is Membrane protein UL148 (UL148).